The sequence spans 156 residues: ATP synthase subunit b (156 aa).

A helical membrane pass occupies residues 7-29; that stretch reads LFAQMVVFLVLAWFTMKFVWPPL.

It belongs to the ATPase B chain family. In terms of assembly, F-type ATPases have 2 components, F(1) - the catalytic core - and F(0) - the membrane proton channel. F(1) has five subunits: alpha(3), beta(3), gamma(1), delta(1), epsilon(1). F(0) has three main subunits: a(1), b(2) and c(10-14). The alpha and beta chains form an alternating ring which encloses part of the gamma chain. F(1) is attached to F(0) by a central stalk formed by the gamma and epsilon chains, while a peripheral stalk is formed by the delta and b chains.

The protein resides in the cell inner membrane. Its function is as follows. F(1)F(0) ATP synthase produces ATP from ADP in the presence of a proton or sodium gradient. F-type ATPases consist of two structural domains, F(1) containing the extramembraneous catalytic core and F(0) containing the membrane proton channel, linked together by a central stalk and a peripheral stalk. During catalysis, ATP synthesis in the catalytic domain of F(1) is coupled via a rotary mechanism of the central stalk subunits to proton translocation. Component of the F(0) channel, it forms part of the peripheral stalk, linking F(1) to F(0). The chain is ATP synthase subunit b from Burkholderia cenocepacia (strain ATCC BAA-245 / DSM 16553 / LMG 16656 / NCTC 13227 / J2315 / CF5610) (Burkholderia cepacia (strain J2315)).